A 311-amino-acid chain; its full sequence is Probable manganese-dependent inorganic pyrophosphatase (311 aa).

Mn(2+) contacts are provided by His-9, Asp-13, Asp-15, Asp-77, His-99, and Asp-151.

The protein belongs to the PPase class C family. It depends on Mn(2+) as a cofactor.

It localises to the cytoplasm. It carries out the reaction diphosphate + H2O = 2 phosphate + H(+). The protein is Probable manganese-dependent inorganic pyrophosphatase of Streptococcus agalactiae serotype Ia (strain ATCC 27591 / A909 / CDC SS700).